A 305-amino-acid chain; its full sequence is NAD kinase (305 aa).

Catalysis depends on D82, which acts as the Proton acceptor. Residues 82–83 (DG), 156–157 (ND), R184, D186, 197–202 (TAYALS), A221, and Q255 contribute to the NAD(+) site.

The protein belongs to the NAD kinase family. It depends on a divalent metal cation as a cofactor.

The protein resides in the cytoplasm. The enzyme catalyses NAD(+) + ATP = ADP + NADP(+) + H(+). In terms of biological role, involved in the regulation of the intracellular balance of NAD and NADP, and is a key enzyme in the biosynthesis of NADP. Catalyzes specifically the phosphorylation on 2'-hydroxyl of the adenosine moiety of NAD to yield NADP. The sequence is that of NAD kinase from Cupriavidus pinatubonensis (strain JMP 134 / LMG 1197) (Cupriavidus necator (strain JMP 134)).